The chain runs to 316 residues: uncharacterized protein (316 aa).

In terms of domain architecture, S4 RNA-binding spans 26–98 (ERIDRFLAGA…IPLDVVYEDA (73 aa)). The active site involves D148.

The protein belongs to the pseudouridine synthase RluA family.

It carries out the reaction a uridine in RNA = a pseudouridine in RNA. This is an uncharacterized protein from Chloroflexus aurantiacus (strain ATCC 29366 / DSM 635 / J-10-fl).